The primary structure comprises 303 residues: ATP-dependent Clp protease ATP-binding subunit CLPT3, chloroplastic (303 aa).

The transit peptide at 1–37 (MLLANAPHNGCSRLQQVTLLRASGAKLHRKRALTVVA) directs the protein to the chloroplast. Disordered regions lie at residues 185-214 (ASTE…RDSD) and 278-303 (RDDN…DEYE).

The protein belongs to the ClpA/ClpB family.

The protein localises to the plastid. It localises to the chloroplast. Accessory protein regulating the assembly of the plastid Clp protease system. This is ATP-dependent Clp protease ATP-binding subunit CLPT3, chloroplastic from Chlamydomonas reinhardtii (Chlamydomonas smithii).